The primary structure comprises 476 residues: MEEPFLPQDEQIVPCKATWKSGQLNVELKKVSRLAVPMATVTIAQYLLPVISVMVAGHNGELQLSGVALATSFTNVSGFSIMFGLVGSLETLSGQAYGAKQYEKMGTYTYSAISSNIPICVLISILWIYMEKLLISLGQDPDISRVAGSYALRLIPTLFAHAIVLPLTRFLLAQGLVLPLLYFALTTLLFHIAVCWTLVSALGLGSNGAALAISVSFWFFAMTLSCYVRFSSSCEKTRRFVSQDFLSSVKQFFRYGVPSAAMLCLEWWLFELLILCSGLLQNPKLETSVLSICLTTATLHYVIPVGVAAAVSTRVSNKLGAGIPQVARVSVLAGLCLWLVESSFFSILLFAFRNIIGYAFSNSKEVVDYVADLSPLLCLSFVLDGFTAVLNGVARGCGWQHIGALNNVVAYYLVGAPVGIYLAFSCELNGKGLWCGVVVGSAVQAIILAIVTASMNWKEQAKKARKRLISSENGLA.

12 helical membrane-spanning segments follow: residues 35-55, 66-86, 117-137, 154-174, 176-196, 208-228, 260-280, 289-309, 332-352, 370-390, 408-428, and 433-453; these read AVPM…SVMV, GVAL…FGLV, IPIC…LISL, LIPT…LLAQ, LVLP…AVCW, GAAL…SCYV, AAML…SGLL, VLSI…GVAA, LAGL…LFAF, VADL…TAVL, VVAY…SCEL, and LWCG…IVTA.

Belongs to the multi antimicrobial extrusion (MATE) (TC 2.A.66.1) family.

The protein localises to the membrane. The chain is Protein DETOXIFICATION 4 from Arabidopsis thaliana (Mouse-ear cress).